The sequence spans 613 residues: Phosphomethylpyrimidine synthase (613 aa).

Residues N215, M244, Y273, H309, 329–331 (SRG), 370–373 (DGLR), and E409 each bind substrate. H413 contributes to the Zn(2+) binding site. Y436 lines the substrate pocket. H477 is a Zn(2+) binding site. [4Fe-4S] cluster contacts are provided by C557, C560, and C565.

This sequence belongs to the ThiC family. In terms of assembly, homodimer. [4Fe-4S] cluster serves as cofactor.

The enzyme catalyses 5-amino-1-(5-phospho-beta-D-ribosyl)imidazole + S-adenosyl-L-methionine = 4-amino-2-methyl-5-(phosphooxymethyl)pyrimidine + CO + 5'-deoxyadenosine + formate + L-methionine + 3 H(+). It participates in cofactor biosynthesis; thiamine diphosphate biosynthesis. Catalyzes the synthesis of the hydroxymethylpyrimidine phosphate (HMP-P) moiety of thiamine from aminoimidazole ribotide (AIR) in a radical S-adenosyl-L-methionine (SAM)-dependent reaction. The sequence is that of Phosphomethylpyrimidine synthase from Paramagnetospirillum magneticum (strain ATCC 700264 / AMB-1) (Magnetospirillum magneticum).